Reading from the N-terminus, the 256-residue chain is Probable elongation factor 1-delta (256 aa).

Ser37, Ser53, and Ser89 each carry phosphoserine. A disordered region spans residues 110–146; the sequence is NGVSKEPEVEAKKPEANDDDDDVDLFGSDSEEEDGEA. Basic and acidic residues predominate over residues 114-125; the sequence is KEPEVEAKKPEA. The segment covering 126 to 144 has biased composition (acidic residues); sequence NDDDDDVDLFGSDSEEEDG. Ser137 and Ser139 each carry phosphoserine.

The protein belongs to the EF-1-beta/EF-1-delta family. As to quaternary structure, EF-1 is composed of 4 subunits: alpha, beta, delta, and gamma.

Its function is as follows. EF-1-beta and EF-1-delta stimulate the exchange of GDP bound to EF-1-alpha to GTP. In Drosophila melanogaster (Fruit fly), this protein is Probable elongation factor 1-delta (eEF1delta).